Consider the following 474-residue polypeptide: MVRAMTAPGSNIAAGALAPAKSSAWRTELIETLWLAWPMALTQLGQIAMMTTDLALIGRLGDAAVAAAALAHFVLFSTFTMGLGLVSAVTPLAAQAFGARAPRQVRASLRVGLWAGVIAGVPLTLGQLYGEELLVALGQNPATSRLAGDYLDGLAWSLVPGWLFIALRGLMGAVNRPEPALWIMLTAIPINLGLAYVLIHGSFGLPRLEIFGAGLATSIVSWAMCIAAAVVCVTMRPFRKYQVFGELFRFDGELMRRLLQLGLPISGASVLEYGVFGAAALLMGKFGTTALAAHQIALQVAAIMFMVPMGISVAATVRVGHAVGRGDPPSARRAGFAAIGLGFVFMAAMTLLVALTRHQIPQLFLGDSDTSIETATLTAALLIVGASFFIADGLQVVANGALRGRNDTKVPLLFAVLGFWVIGFPFCWVLGFHTDLGPFGVWIGLAVGLVVYAALLVWRFHRLTRDAMAAAVAA.

The next 12 membrane-spanning stretches (helical) occupy residues 33–50 (LWLA…IAMM), 65–87 (VAAA…GLVS), 108–130 (SLRV…QLYG), 150–172 (YLDG…GLMG), 179–201 (PALW…LIHG), 211–233 (FGAG…VVCV), 258–280 (LLQL…GAAA), 295–317 (QIAL…AATV), 334–356 (AGFA…VALT), 376–398 (TLTA…QVVA), 410–432 (VPLL…VLGF), and 436–458 (LGPF…LLVW).

This sequence belongs to the multi antimicrobial extrusion (MATE) (TC 2.A.66.1) family.

The protein resides in the cell inner membrane. Functionally, multidrug efflux pump. The polypeptide is Probable multidrug resistance protein NorM (norM) (Rhodopseudomonas palustris (strain ATCC BAA-98 / CGA009)).